Reading from the N-terminus, the 112-residue chain is MAKGGFPGMGGGNMNNLIKQAQKFQKQMEDMQKEIENKEFTATVGGGAVSATVSGKKEITEIKIKPEVVDPDDVEMLQDLILSACNEALKKAEEETSGEMKKLTGGLNIPGL.

A compositionally biased stretch (basic and acidic residues) spans 93–102 (EEETSGEMKK). A disordered region spans residues 93 to 112 (EEETSGEMKKLTGGLNIPGL).

This sequence belongs to the YbaB/EbfC family. As to quaternary structure, homodimer.

It localises to the cytoplasm. Its subcellular location is the nucleoid. Functionally, binds to DNA and alters its conformation. May be involved in regulation of gene expression, nucleoid organization and DNA protection. The polypeptide is Nucleoid-associated protein CA_C0126 (Clostridium acetobutylicum (strain ATCC 824 / DSM 792 / JCM 1419 / IAM 19013 / LMG 5710 / NBRC 13948 / NRRL B-527 / VKM B-1787 / 2291 / W)).